A 672-amino-acid chain; its full sequence is Tubulin--tyrosine ligase-like protein 12 (672 aa).

Positions 332 to 670 constitute a TTL domain; sequence KIKIFLQIFA…LDEIDPTKVT (339 aa). ATP-binding positions include 480 to 483, Lys499, and Asp501; that span reads CEYI.

It belongs to the tubulin--tyrosine ligase family.

Regulates microtubule dynamics in uterine muscle cells. This chain is Tubulin--tyrosine ligase-like protein 12, found in Caenorhabditis briggsae.